Consider the following 494-residue polypeptide: Cysteine--tRNA ligase (494 aa).

Cysteine 29 serves as a coordination point for Zn(2+). The short motif at 31–41 (VTVYDHCHIGH) is the 'HIGH' region element. Residues cysteine 209, histidine 234, and glutamate 238 each contribute to the Zn(2+) site. The short motif at 266 to 270 (KMSKS) is the 'KMSKS' region element. Lysine 269 provides a ligand contact to ATP.

Belongs to the class-I aminoacyl-tRNA synthetase family. In terms of assembly, monomer. Requires Zn(2+) as cofactor.

It localises to the cytoplasm. It catalyses the reaction tRNA(Cys) + L-cysteine + ATP = L-cysteinyl-tRNA(Cys) + AMP + diphosphate. This chain is Cysteine--tRNA ligase, found in Geotalea daltonii (strain DSM 22248 / JCM 15807 / FRC-32) (Geobacter daltonii).